The primary structure comprises 463 residues: Sodium-coupled neutral amino acid transporter 7 (463 aa).

A Phosphoserine modification is found at serine 28. Helical transmembrane passes span 56–76, 82–102, 130–150, 179–199, 206–226, 240–260, 283–303, 320–340, 372–392, 396–416, and 429–449; these read AIFI…PAAF, VAAG…GLVI, LCEV…LIII, FTIS…REIG, FLSV…YIWP, ASWI…QCHV, AAMV…FLTF, MAVA…YPIL, VLQT…IPDI, ISVI…LCLI, and ASWW…AFIF.

Belongs to the amino acid/polyamine transporter 2 family. As to quaternary structure, interacts with the mTORC1 complex; this interaction mediates the recruitment of mTORC1 to the lysosome and its subsequent activation.

The protein resides in the lysosome membrane. The protein localises to the cell projection. It localises to the axon. The enzyme catalyses L-asparagine(in) + Na(+)(in) = L-asparagine(out) + Na(+)(out). The catalysed reaction is L-glutamine(in) + Na(+)(in) = L-glutamine(out) + Na(+)(out). Functionally, symporter that selectively cotransports sodium ions and amino acids, such as L-glutamine and L-asparagine from the lysosome into the cytoplasm and may participates in mTORC1 activation. The transport activity requires an acidic lysosomal lumen. The sequence is that of Sodium-coupled neutral amino acid transporter 7 from Bos taurus (Bovine).